Here is a 307-residue protein sequence, read N- to C-terminus: Nucleotide-binding protein Acid345_3782 (307 aa).

31–38 contacts ATP; it reads GLSGSGKA. 81 to 84 lines the GTP pocket; sequence DIRE.

The protein belongs to the RapZ-like family.

Its function is as follows. Displays ATPase and GTPase activities. The sequence is that of Nucleotide-binding protein Acid345_3782 from Koribacter versatilis (strain Ellin345).